The primary structure comprises 311 residues: MGTGNDTTVVEFTLLGLSEDTTVCAILFLVFLGIYVVTLMGNISIIVLIRRSHHLHTPMYIFLCHLAFVDIGYSSSVTPVMLMSFLRKETSLPVAGCVAQLCSVVTFGTAECFLLAAMAYDRYVAICSPLLYSTCMSPGVCIILVGMSYLGGCVNAWTFIGCLLRLSFCGPNKVNHFFCDYSPLLKLACSHDFTFEIIPAISSGSIIVATVCVIAISYIYILITILKMHSTKGRHKAFSTCTSHLTAVTLFYGTITFIYVMPKSSYSTDQNKVVSVFYTVVIPMLNPLIYSLRNKEIKGALKRELRIKIFS.

Residues 1–25 lie on the Extracellular side of the membrane; sequence MGTGNDTTVVEFTLLGLSEDTTVCA. A glycan (N-linked (GlcNAc...) asparagine) is linked at N5. The chain crosses the membrane as a helical span at residues 26–46; the sequence is ILFLVFLGIYVVTLMGNISII. The Cytoplasmic segment spans residues 47–54; it reads VLIRRSHH. The helical transmembrane segment at 55 to 75 threads the bilayer; sequence LHTPMYIFLCHLAFVDIGYSS. The Extracellular portion of the chain corresponds to 76–99; sequence SVTPVMLMSFLRKETSLPVAGCVA. C97 and C189 form a disulfide bridge. Residues 100–120 traverse the membrane as a helical segment; it reads QLCSVVTFGTAECFLLAAMAY. Residues 121–139 lie on the Cytoplasmic side of the membrane; sequence DRYVAICSPLLYSTCMSPG. A helical transmembrane segment spans residues 140 to 160; sequence VCIILVGMSYLGGCVNAWTFI. The Extracellular portion of the chain corresponds to 161 to 196; sequence GCLLRLSFCGPNKVNHFFCDYSPLLKLACSHDFTFE. Residues 197-217 traverse the membrane as a helical segment; the sequence is IIPAISSGSIIVATVCVIAIS. At 218–237 the chain is on the cytoplasmic side; that stretch reads YIYILITILKMHSTKGRHKA. The helical transmembrane segment at 238 to 258 threads the bilayer; it reads FSTCTSHLTAVTLFYGTITFI. At 259–271 the chain is on the extracellular side; that stretch reads YVMPKSSYSTDQN. The chain crosses the membrane as a helical span at residues 272 to 292; the sequence is KVVSVFYTVVIPMLNPLIYSL. The Cytoplasmic portion of the chain corresponds to 293-311; the sequence is RNKEIKGALKRELRIKIFS.

This sequence belongs to the G-protein coupled receptor 1 family. As to expression, expressed in the tongue.

It localises to the cell membrane. In terms of biological role, odorant receptor (Potential). May be involved in taste perception. This is Olfactory receptor 5P3 (OR5P3) from Homo sapiens (Human).